The primary structure comprises 128 residues: Small ribosomal subunit protein eS8 (128 aa).

Belongs to the eukaryotic ribosomal protein eS8 family. Part of the 30S ribosomal subunit.

The protein is Small ribosomal subunit protein eS8 of Methanococcus maripaludis (strain DSM 14266 / JCM 13030 / NBRC 101832 / S2 / LL).